Reading from the N-terminus, the 322-residue chain is TATA box-binding protein-like 2 (322 aa).

The disordered stretch occupies residues 31 to 54 (PALSSTQDSTYLSGRAGPSRESGA). Polar residues predominate over residues 32 to 42 (ALSSTQDSTYL).

This sequence belongs to the TBP family.

It localises to the nucleus. Its function is as follows. TATA box-binding transcription factor. Members of the TBP family are differentially required to regulate transcription and development during early embryogenesis. This chain is TATA box-binding protein-like 2, found in Takifugu rubripes (Japanese pufferfish).